The following is a 250-amino-acid chain: S-adenosyl-L-methionine-dependent 2-deoxy-scyllo-inosamine dehydrogenase (250 aa).

[4Fe-4S] cluster is bound by residues Cys16, Cys20, Cys23, Cys169, Cys187, and Glu223.

The protein belongs to the radical SAM superfamily. Requires [4Fe-4S] cluster as cofactor.

It catalyses the reaction 2-deoxy-scyllo-inosamine + S-adenosyl-L-methionine = 3-amino-2,3-dideoxy-scyllo-inosose + 5'-deoxyadenosine + L-methionine + H(+). The protein operates within antibiotic biosynthesis; butirosin biosynthesis. Catalyzes the radical S-adenosyl-L-methionine (SAM)-dependent two-electron oxidation of 2-deoxy-scyllo-inosamine (DOIA) to amino-dideoxy-scyllo-inosose (amino-DOI) in the biosynthetic pathway of butirosin. This chain is S-adenosyl-L-methionine-dependent 2-deoxy-scyllo-inosamine dehydrogenase (btrN), found in Niallia circulans (Bacillus circulans).